The primary structure comprises 104 residues: uncharacterized protein (104 aa).

This is an uncharacterized protein from Schizosaccharomyces pombe (strain 972 / ATCC 24843) (Fission yeast).